The primary structure comprises 396 residues: Elongation factor Tu (396 aa).

Residues 10-206 (KPHVNVGTIG…ALDTYIPTPE (197 aa)) form the tr-type G domain. A G1 region spans residues 19 to 26 (GHVDHGKT). 19–26 (GHVDHGKT) contributes to the GTP binding site. Thr26 contributes to the Mg(2+) binding site. Residues 60–64 (GITIN) form a G2 region. The interval 81–84 (DCPG) is G3. GTP is bound by residues 81-85 (DCPGH) and 136-139 (NKCD). Residues 136-139 (NKCD) form a G4 region. The interval 174–176 (SAK) is G5.

This sequence belongs to the TRAFAC class translation factor GTPase superfamily. Classic translation factor GTPase family. EF-Tu/EF-1A subfamily. Monomer.

It is found in the cytoplasm. It carries out the reaction GTP + H2O = GDP + phosphate + H(+). Functionally, GTP hydrolase that promotes the GTP-dependent binding of aminoacyl-tRNA to the A-site of ribosomes during protein biosynthesis. The polypeptide is Elongation factor Tu (Polynucleobacter asymbioticus (strain DSM 18221 / CIP 109841 / QLW-P1DMWA-1) (Polynucleobacter necessarius subsp. asymbioticus)).